Here is a 519-residue protein sequence, read N- to C-terminus: Probable FAD synthase (519 aa).

A molybdenum cofactor biosynthesis protein-like region spans residues 17-108 (AILVIGDEIL…TDQMQFSDEI (92 aa)). Positions 328–485 (QIALSFNGGK…SLGGRDNTVK (158 aa)) are FAD synthase.

This sequence in the N-terminal section; belongs to the MoaB/Mog family. The protein in the C-terminal section; belongs to the PAPS reductase family. FAD1 subfamily. It depends on Mg(2+) as a cofactor.

It carries out the reaction FMN + ATP + H(+) = FAD + diphosphate. It participates in cofactor biosynthesis; FAD biosynthesis; FAD from FMN: step 1/1. Functionally, catalyzes the adenylation of flavin mononucleotide (FMN) to form flavin adenine dinucleotide (FAD) coenzyme. The sequence is that of Probable FAD synthase from Caenorhabditis elegans.